The chain runs to 259 residues: Sesquipedalian-2 (259 aa).

A PH domain is found at 17 to 121 (PADHMGFLRT…WVKVLSRASF (105 aa)). The stretch at 124–149 (MRLVVRELESQLQDARQSLALQRRSS) forms a coiled coil. The short motif at 223-235 (CFSTLHDWYGQEI) is the F&amp;H element.

Belongs to the sesquipedalian family. In terms of assembly, forms homodimers and heterodimers with PHETA1. Interacts with OCRL and INPP5B.

Its subcellular location is the early endosome. It localises to the recycling endosome. The protein localises to the golgi apparatus. It is found in the trans-Golgi network. The protein resides in the cytoplasmic vesicle. Its subcellular location is the clathrin-coated vesicle. In terms of biological role, plays a role in endocytic trafficking. Required for receptor recycling from endosomes, both to the trans-Golgi network and the plasma membrane. The polypeptide is Sesquipedalian-2 (Homo sapiens (Human)).